We begin with the raw amino-acid sequence, 342 residues long: S-adenosylmethionine:tRNA ribosyltransferase-isomerase (342 aa).

Belongs to the QueA family. In terms of assembly, monomer.

It localises to the cytoplasm. It carries out the reaction 7-aminomethyl-7-carbaguanosine(34) in tRNA + S-adenosyl-L-methionine = epoxyqueuosine(34) in tRNA + adenine + L-methionine + 2 H(+). It participates in tRNA modification; tRNA-queuosine biosynthesis. Its function is as follows. Transfers and isomerizes the ribose moiety from AdoMet to the 7-aminomethyl group of 7-deazaguanine (preQ1-tRNA) to give epoxyqueuosine (oQ-tRNA). This Geobacillus kaustophilus (strain HTA426) protein is S-adenosylmethionine:tRNA ribosyltransferase-isomerase.